The chain runs to 297 residues: Non-structural protein VP10 (297 aa).

This is Non-structural protein VP10 from Oryza latifolia (Indian wild rice).